The primary structure comprises 1019 residues: Collagen alpha-1(VI) chain (1019 aa).

The first 19 residues, 1–19 (MGLHDSFLALLLLLGGAWA), serve as a signal peptide directing secretion. In terms of domain architecture, VWFA 1 spans 37-233 (DLFFVLDTSE…LDVEETINNI (197 aa)). An N-linked (GlcNAc...) asparagine glycan is attached at N212. The disordered stretch occupies residues 248–588 (FECHPPRGPP…GPPGPVGPPG (341 aa)). A compositionally biased stretch (pro residues) spans 253 to 262 (PRGPPGPPGD). Basic and acidic residues-rich tracts occupy residues 299 to 332 (KGDK…DGMK) and 370 to 380 (GKGEPGEDGKP). Over residues 427–436 (ERGPPGSPGD) the composition is skewed to low complexity. The Cell attachment site motif lies at 476 to 478 (RGD). N514 carries an N-linked (GlcNAc...) asparagine glycan. The Cell attachment site motif lies at 529–531 (RGD). The N-linked (GlcNAc...) asparagine glycan is linked to N535. Residues 577–588 (RPGPPGPVGPPG) are compositionally biased toward pro residues. 2 VWFA domains span residues 613–800 (DLLF…LQNI) and 824–1012 (DIML…YQTV). N-linked (GlcNAc...) asparagine glycans are attached at residues N799 and N887.

This sequence belongs to the type VI collagen family. As to quaternary structure, trimers composed of three different chains: alpha 1(VI), alpha 2(VI), and alpha 3(VI). Prolines at the third position of the tripeptide repeating unit (G-X-Y) are hydroxylated in some or all of the chains.

The protein localises to the secreted. It localises to the extracellular space. Its subcellular location is the extracellular matrix. Collagen VI acts as a cell-binding protein. This is Collagen alpha-1(VI) chain (COL6A1) from Gallus gallus (Chicken).